We begin with the raw amino-acid sequence, 379 residues long: Homoserine O-acetyltransferase (379 aa).

The AB hydrolase-1 domain occupies 45-355; it reads NAILILHALT…PHGHDAFLIE (311 aa). Catalysis depends on Ser151, which acts as the Nucleophile. Position 220 (Arg220) interacts with substrate. Catalysis depends on residues Asp316 and His349. Substrate is bound at residue Asp350.

Belongs to the AB hydrolase superfamily. MetX family. In terms of assembly, homodimer.

The protein localises to the cytoplasm. It catalyses the reaction L-homoserine + acetyl-CoA = O-acetyl-L-homoserine + CoA. It participates in amino-acid biosynthesis; L-methionine biosynthesis via de novo pathway; O-acetyl-L-homoserine from L-homoserine: step 1/1. Its function is as follows. Transfers an acetyl group from acetyl-CoA to L-homoserine, forming acetyl-L-homoserine. In Carboxydothermus hydrogenoformans (strain ATCC BAA-161 / DSM 6008 / Z-2901), this protein is Homoserine O-acetyltransferase.